The primary structure comprises 370 residues: Metallophosphoesterase 1 homolog (370 aa).

Residues 7–27 (CFVIVLCALIFCEYVADFVVL) traverse the membrane as a helical segment. Asp52, Asp94, Asn132, His225, His275, and His277 together coordinate a divalent metal cation. The helical transmembrane segment at 328 to 348 (FVFNSYLSAGILCLIVIGFQL) threads the bilayer.

Belongs to the metallophosphoesterase superfamily. MPPE1 family. It depends on Mn(2+) as a cofactor.

It is found in the membrane. Its function is as follows. Metallophosphoesterase. The chain is Metallophosphoesterase 1 homolog (PGAP5) from Drosophila melanogaster (Fruit fly).